We begin with the raw amino-acid sequence, 428 residues long: ATP-dependent RNA helicase RhlB (428 aa).

The Q motif signature appears at 9–37; the sequence is QKFSDFALHPLVLEALEKKGFQHCTPIQA. A Helicase ATP-binding domain is found at 40–219; the sequence is LPLTLSGRDV…FEQMNNAEYV (180 aa). 53–60 provides a ligand contact to ATP; it reads AQTGTGKT. Positions 165 to 168 match the DEAD box motif; it reads DEAD. One can recognise a Helicase C-terminal domain in the interval 245–390; the sequence is RLLQTLIEEE…VSKYNSDALL (146 aa). Residues 392–428 form a disordered region; it reads DLPAPKRLARPRGGNGPRRNSAPRRGGAPRNNRKRSG. Residues 408 to 421 are compositionally biased toward low complexity; sequence PRRNSAPRRGGAPR.

Belongs to the DEAD box helicase family. RhlB subfamily. Component of the RNA degradosome, which is a multiprotein complex involved in RNA processing and mRNA degradation.

It localises to the cytoplasm. The enzyme catalyses ATP + H2O = ADP + phosphate + H(+). Its function is as follows. DEAD-box RNA helicase involved in RNA degradation. Has RNA-dependent ATPase activity and unwinds double-stranded RNA. This chain is ATP-dependent RNA helicase RhlB, found in Serratia proteamaculans (strain 568).